Consider the following 729-residue polypeptide: Fatty acid oxidation complex subunit alpha (729 aa).

Residues 1-189 form an enoyl-CoA hydratase/isomerase region; that stretch reads MLYKGDTLYL…KIGLVDGVVK (189 aa). Asp296 provides a ligand contact to substrate. Positions 311-729 are 3-hydroxyacyl-CoA dehydrogenase; sequence ETPKQAAVLG…ARPVGSLKTA (419 aa). Residues Met324, Asp343, 400-402, Lys407, and Ser429 contribute to the NAD(+) site; that span reads VVE. His450 (for 3-hydroxyacyl-CoA dehydrogenase activity) is an active-site residue. Asn453 serves as a coordination point for NAD(+). Positions 500 and 660 each coordinate substrate. Residues 708-729 are disordered; it reads RHNEPYYPPVEPARPVGSLKTA.

This sequence in the N-terminal section; belongs to the enoyl-CoA hydratase/isomerase family. It in the C-terminal section; belongs to the 3-hydroxyacyl-CoA dehydrogenase family. Heterotetramer of two alpha chains (FadB) and two beta chains (FadA).

It carries out the reaction a (3S)-3-hydroxyacyl-CoA + NAD(+) = a 3-oxoacyl-CoA + NADH + H(+). The catalysed reaction is a (3S)-3-hydroxyacyl-CoA = a (2E)-enoyl-CoA + H2O. The enzyme catalyses a 4-saturated-(3S)-3-hydroxyacyl-CoA = a (3E)-enoyl-CoA + H2O. It catalyses the reaction (3S)-3-hydroxybutanoyl-CoA = (3R)-3-hydroxybutanoyl-CoA. It carries out the reaction a (3Z)-enoyl-CoA = a 4-saturated (2E)-enoyl-CoA. The catalysed reaction is a (3E)-enoyl-CoA = a 4-saturated (2E)-enoyl-CoA. It participates in lipid metabolism; fatty acid beta-oxidation. Involved in the aerobic and anaerobic degradation of long-chain fatty acids via beta-oxidation cycle. Catalyzes the formation of 3-oxoacyl-CoA from enoyl-CoA via L-3-hydroxyacyl-CoA. It can also use D-3-hydroxyacyl-CoA and cis-3-enoyl-CoA as substrate. This chain is Fatty acid oxidation complex subunit alpha, found in Salmonella schwarzengrund (strain CVM19633).